Reading from the N-terminus, the 898-residue chain is Nitrate reductase [NAD(P)H] (898 aa).

Residues Met1–Pro15 show a composition bias toward basic and acidic residues. The disordered stretch occupies residues Met1–Asp65. Cys180 lines the Mo-molybdopterin pocket. The Cytochrome b5 heme-binding domain maps to Ser528 to Ile603. Residues His563 and His586 each coordinate heme. The 113-residue stretch at Gly642–Thr754 folds into the FAD-binding FR-type domain. FAD-binding positions include Arg694–Thr697, Val711–Tyr715, Phe716, Phe723, Leu728–Ser730, and Thr781.

It belongs to the nitrate reductase family. In terms of assembly, homodimer. Requires FAD as cofactor. Heme serves as cofactor. Mo-molybdopterin is required as a cofactor.

The enzyme catalyses nitrite + NAD(+) + H2O = nitrate + NADH + H(+). It carries out the reaction nitrite + NADP(+) + H2O = nitrate + NADPH + H(+). Nitrate reductase is a key enzyme involved in the first step of nitrate assimilation in plants, fungi and bacteria. This Betula pendula (European white birch) protein is Nitrate reductase [NAD(P)H] (NIA1).